The following is a 524-amino-acid chain: 3-epi-6-deoxocathasterone 23-monooxygenase CYP90C1 (524 aa).

A helical membrane pass occupies residues 25–45 (YLVAGFLVLTAGILLRPWLWL). A heme-binding site is contributed by C463.

This sequence belongs to the cytochrome P450 family. Heme serves as cofactor. Widely expressed.

The protein resides in the endoplasmic reticulum membrane. The enzyme catalyses 3-epi-6-deoxocathasterone + reduced [NADPH--hemoprotein reductase] + O2 = 6-deoxotyphasterol + oxidized [NADPH--hemoprotein reductase] + H2O + H(+). It carries out the reaction (22S,24R)-22-hydroxy-5alpha-ergostan-3-one + reduced [NADPH--hemoprotein reductase] + O2 = 3-dehydro-6-deoxoteasterone + oxidized [NADPH--hemoprotein reductase] + H2O + H(+). Its pathway is plant hormone biosynthesis; brassinosteroid biosynthesis. In terms of biological role, involved in brassinosteroid (BR) biosynthesis. Converts typhasterol (TY) to cathasterone (CS) and 6-deoxotyphasterol (6-deoxoTY) to 6-deoxocathasterone (6-deoxoCT). C-23 hydroxylase that converts directly (22S,24R)-22-hydroxy-5-alpha-ergostan-3-one and 3-epi-6-deoxocathasterone to 3-dehydro-6-deoxoteasterone (6-deoxo3DT, 6-deoxo3DHT) and 6-deoxotyphasterol (6-deoxoTY), respectively. These C-23 hydroxylation shortcuts bypass campestanol, 6-deoxocathasterone, and 6-deoxoteasterone (6-deoxoTE). Also catalyzes the conversion of cathasterone to teasterone (TE), (22S,24R)-22-hydroxyergost-4-en-3-one (22-OH-4-en-3-one) to (22R,23R)-22,23-dihydroxy-campest-4-en-3-one (22,23-diOH-4-en-3-one) and (22S)-22-hydroxycampesterol (22-OHCR) to (22R,23R)-22,23-dihydroxycampesterol (22,23-diOHCR). Required for the regulation of polar elongation of leaf cells. Required for the longitudinal elongation of floral organs. The polypeptide is 3-epi-6-deoxocathasterone 23-monooxygenase CYP90C1 (Arabidopsis thaliana (Mouse-ear cress)).